Consider the following 339-residue polypeptide: Ketol-acid reductoisomerase (NADP(+)) (339 aa).

The 182-residue stretch at 1-182 folds into the KARI N-terminal Rossmann domain; it reads MRVYYDRDAD…GGGRSGIIET (182 aa). Residues 24–27, Lys48, Ser51, Thr53, and 83–86 contribute to the NADP(+) site; these read YGSQ and DELQ. His108 is a catalytic residue. Gly134 serves as a coordination point for NADP(+). Positions 183-328 constitute a KARI C-terminal knotted domain; it reads NFREECETDL…AKLRGMMPWI (146 aa). Asp191, Glu195, Glu227, and Glu231 together coordinate Mg(2+). Residue Ser252 participates in substrate binding.

This sequence belongs to the ketol-acid reductoisomerase family. Requires Mg(2+) as cofactor.

It catalyses the reaction (2R)-2,3-dihydroxy-3-methylbutanoate + NADP(+) = (2S)-2-acetolactate + NADPH + H(+). The enzyme catalyses (2R,3R)-2,3-dihydroxy-3-methylpentanoate + NADP(+) = (S)-2-ethyl-2-hydroxy-3-oxobutanoate + NADPH + H(+). Its pathway is amino-acid biosynthesis; L-isoleucine biosynthesis; L-isoleucine from 2-oxobutanoate: step 2/4. It functions in the pathway amino-acid biosynthesis; L-valine biosynthesis; L-valine from pyruvate: step 2/4. In terms of biological role, involved in the biosynthesis of branched-chain amino acids (BCAA). Catalyzes an alkyl-migration followed by a ketol-acid reduction of (S)-2-acetolactate (S2AL) to yield (R)-2,3-dihydroxy-isovalerate. In the isomerase reaction, S2AL is rearranged via a Mg-dependent methyl migration to produce 3-hydroxy-3-methyl-2-ketobutyrate (HMKB). In the reductase reaction, this 2-ketoacid undergoes a metal-dependent reduction by NADPH to yield (R)-2,3-dihydroxy-isovalerate. The polypeptide is Ketol-acid reductoisomerase (NADP(+)) (Rhizobium etli (strain ATCC 51251 / DSM 11541 / JCM 21823 / NBRC 15573 / CFN 42)).